The chain runs to 608 residues: Glutamine--fructose-6-phosphate aminotransferase [isomerizing] (608 aa).

Cys-2 (nucleophile; for GATase activity) is an active-site residue. A Glutamine amidotransferase type-2 domain is found at 2 to 217 (CGIVGYSGKK…DKEFVVLTSE (216 aa)). 2 SIS domains span residues 285–424 (TKEQ…NKNT) and 453–598 (KVQK…VDKP). Lys-603 (for Fru-6P isomerization activity) is an active-site residue.

Homodimer.

The protein localises to the cytoplasm. The catalysed reaction is D-fructose 6-phosphate + L-glutamine = D-glucosamine 6-phosphate + L-glutamate. In terms of biological role, catalyzes the first step in hexosamine metabolism, converting fructose-6P into glucosamine-6P using glutamine as a nitrogen source. The sequence is that of Glutamine--fructose-6-phosphate aminotransferase [isomerizing] from Clostridium acetobutylicum (strain ATCC 824 / DSM 792 / JCM 1419 / IAM 19013 / LMG 5710 / NBRC 13948 / NRRL B-527 / VKM B-1787 / 2291 / W).